The primary structure comprises 362 residues: Class I histocompatibility antigen, Gogo-OKO alpha chain (362 aa).

Residues 1-24 (MAVVAPRTLLLLLSGTLALTRTWA) form the signal peptide. Residues 25-114 (GSHSMRYFYT…LRGYYNQSEG (90 aa)) form an alpha-1 region. Residues 25–308 (GSHSMRYFYT…EPSSQPTIPI (284 aa)) lie on the Extracellular side of the membrane. N-linked (GlcNAc...) asparagine glycosylation occurs at Asn-110. Positions 115-206 (GSHTIQRMYG…ENGKETLQRT (92 aa)) are alpha-2. Cystine bridges form between Cys-125–Cys-188 and Cys-227–Cys-283. The tract at residues 207–298 (DPPKTHMTHH…GLPKPLTLRW (92 aa)) is alpha-3. The region spanning 209 to 295 (PKTHMTHHPV…QHEGLPKPLT (87 aa)) is the Ig-like C1-type domain. Positions 299 to 308 (EPSSQPTIPI) are connecting peptide. Residues 309 to 332 (VGIIAGLVLLGAVITGAVVAAMMW) traverse the membrane as a helical segment. Residues 333-362 (RKKSSGRKGGSYSQAASSDSAQGSDVSLTA) lie on the Cytoplasmic side of the membrane. Residues 337–362 (SGRKGGSYSQAASSDSAQGSDVSLTA) are disordered. Positions 342–362 (GSYSQAASSDSAQGSDVSLTA) are enriched in low complexity.

Belongs to the MHC class I family. As to quaternary structure, heterodimer of an alpha chain and a beta chain (beta-2-microglobulin).

Its subcellular location is the membrane. Involved in the presentation of foreign antigens to the immune system. The sequence is that of Class I histocompatibility antigen, Gogo-OKO alpha chain from Gorilla gorilla gorilla (Western lowland gorilla).